The following is a 293-amino-acid chain: Haloalkane dehalogenase (293 aa).

The 125-residue stretch at 34–158 (PVLFLHGNPT…FQAFRTADVG (125 aa)) folds into the AB hydrolase-1 domain. Catalysis depends on aspartate 106, which acts as the Nucleophile. The Proton donor role is filled by glutamate 130. Histidine 272 (proton acceptor) is an active-site residue.

This sequence belongs to the haloalkane dehalogenase family. Type 2 subfamily. Monomer.

The enzyme catalyses 1-haloalkane + H2O = a halide anion + a primary alcohol + H(+). The protein operates within xenobiotic degradation; haloalkane degradation. It functions in the pathway xenobiotic degradation; 1,3-dichloropropene degradation. In terms of biological role, catalyzes hydrolytic cleavage of carbon-halogen bonds in halogenated aliphatic compounds, leading to the formation of the corresponding primary alcohols, halide ions and protons. Has a broad substrate specificity, as it is able to dehalogenate mono- and di- chlorinated and brominated alkanes (up to at least C10), and the two isomers of 1,3-dichloropropene to 3-chloroallyl alcohol; the highest activity was found with 1,2-dibromoethane, while no activity was observed with the analog 1,2-dichloroethane. In Pseudomonas pavonaceae, this protein is Haloalkane dehalogenase (dhaA).